We begin with the raw amino-acid sequence, 330 residues long: UDP-glucose 4-epimerase (330 aa).

Residues 11–12 (YI), 31–36 (DALYTG), 51–52 (DI), 73–77 (FAAYS), N92, S117, Y141, K145, and F169 contribute to the NAD(+) site. The substrate site is built by S117 and Y141. Y141 functions as the Proton acceptor in the catalytic mechanism. Substrate-binding positions include N170, 189-190 (HL), 206-208 (TIF), R221, and 282-285 (RGGD).

Belongs to the NAD(P)-dependent epimerase/dehydratase family. Homodimer. NAD(+) is required as a cofactor.

The enzyme catalyses UDP-alpha-D-glucose = UDP-alpha-D-galactose. The protein operates within carbohydrate metabolism; galactose metabolism. Its function is as follows. Involved in the metabolism of galactose. Catalyzes the conversion of UDP-galactose (UDP-Gal) to UDP-glucose (UDP-Glc) through a mechanism involving the transient reduction of NAD. It also could be involved in preparation of carbohydrate residues for incorporation into complex polymers, such as exopolysaccharides. The sequence is that of UDP-glucose 4-epimerase (galE) from Lactobacillus helveticus (Lactobacillus suntoryeus).